A 690-amino-acid polypeptide reads, in one-letter code: Adhesion G protein-coupled receptor L4 (690 aa).

The first 19 residues, 1–19 (MKRLPLLVVFSTLLNCSYT), serve as a signal peptide directing secretion. An EGF-like 1 domain is found at 20-57 (QNCTKTPCLPNAKCEIRNGIEACYCNMGFSGNGVTICE). The Extracellular segment spans residues 20–432 (QNCTKTPCLP…DYNILTRITQ (413 aa)). The N-linked (GlcNAc...) asparagine glycan is linked to Asn21. Disulfide bonds link Cys22/Cys33, Cys27/Cys42, Cys44/Cys56, Cys62/Cys75, Cys69/Cys84, and Cys86/Cys107. The EGF-like 2; calcium-binding domain maps to 58–108 (DDNECGNLTQSCGENANCTNTEGSYYCMCVPGFRSSSNQDRFITNDGTVCI). 2 N-linked (GlcNAc...) asparagine glycosylation sites follow: Asn64 and Asn74. N-linked (GlcNAc...) asparagine glycosylation is found at Asn127, Asn177, Asn188, Asn249, Asn381, and Asn395. One can recognise a GAIN-B domain in the interval 244–419 (TEFDTNSTDI…AILMSSGPSI (176 aa)). 2 cysteine pairs are disulfide-bonded: Cys370-Cys401 and Cys389-Cys403. Residues 370-419 (CAFWNYSPDTMNGSWSSEGCELTYSNETHTSCRCNHLTHFAILMSSGPSI) form a GPS region. A helical transmembrane segment spans residues 433 to 453 (LGIIISLICLAICIFTFWFFS). The Cytoplasmic segment spans residues 454-460 (EIQSTRT). A helical membrane pass occupies residues 461–481 (TIHKNLCCSLFLAELVFLVGI). The Extracellular portion of the chain corresponds to 482-499 (NTNTNKLFCSIIAGLLHY). The chain crosses the membrane as a helical span at residues 500 to 520 (FFLAAFAWMCIEGIHLYLIVV). At 521 to 532 (GVIYNKGFLHKN) the chain is on the cytoplasmic side. The helical transmembrane segment at 533 to 553 (FYIFGYLSPAVVVGFSAALGY) threads the bilayer. Over 554 to 573 (RYYGTTKVCWLSTENNFIWS) the chain is Extracellular. Residues 574 to 594 (FIGPACLIILVNLLAFGVIIY) traverse the membrane as a helical segment. The Cytoplasmic segment spans residues 595 to 618 (KVFRHTAGLKPEVSCFENIRSCAR). A helical transmembrane segment spans residues 619–639 (GALALLFLLGTTWIFGVLHVV). Residues 640-646 (HASVVTA) are Extracellular-facing. Residues 647–667 (YLFTVSNAFQGMFIFLFLCVL) traverse the membrane as a helical segment. The Cytoplasmic portion of the chain corresponds to 668-690 (SRKIQEEYYRLFKNVPCCFGCLR).

The protein belongs to the G-protein coupled receptor 2 family. Adhesion G-protein coupled receptor (ADGR) subfamily. In terms of assembly, heterodimer of 2 chains generated by proteolytic processing; the large extracellular N-terminal fragment and the membrane-bound C-terminal fragment predominantly remain associated and non-covalently linked. Glycosylated. Post-translationally, proteolytically cleaved into 2 subunits, an extracellular alpha subunit and a seven-transmembrane subunit. As to expression, detected in the majority of epithelial cells in tumor and normal tissues. Expressed also in human umbilical vein endothelial cells.

Its subcellular location is the cell membrane. Functionally, endothelial orphan receptor that acts as a key regulator of angiogenesis. This is Adhesion G protein-coupled receptor L4 from Homo sapiens (Human).